We begin with the raw amino-acid sequence, 373 residues long: Malate dehydrogenase, mitochondrial (373 aa).

Residues 69–75 (GAAGGIG) and D95 contribute to the NAD(+) site. Residues R141 and R147 each coordinate substrate. Residues N154 and 177–179 (ISN) contribute to the NAD(+) site. Positions 179 and 213 each coordinate substrate. H237 acts as the Proton acceptor in catalysis. Position 288 (M288) interacts with NAD(+).

Belongs to the LDH/MDH superfamily. MDH type 1 family. As to quaternary structure, homodimer.

It is found in the mitochondrion matrix. It carries out the reaction (S)-malate + NAD(+) = oxaloacetate + NADH + H(+). The protein is Malate dehydrogenase, mitochondrial of Chlamydomonas reinhardtii (Chlamydomonas smithii).